The primary structure comprises 545 residues: Arginine-containing cyclodipeptide synthase ateA (545 aa).

The segment covering 390 to 425 (GNQQTPTQSADMDSTVSHRQQQPASSRSYTSKQNQM) has biased composition (polar residues). The tract at residues 390–433 (GNQQTPTQSADMDSTVSHRQQQPASSRSYTSKQNQMPRPLVISV) is disordered. Positions 434–438 (DDPSE) match the Conserved DDXXE motif motif.

This sequence belongs to the arginine-containing cyclodipeptide synthase family.

The enzyme catalyses L-glutamyl-tRNA(Glu) + L-arginyl-tRNA(Arg) = cyclo(L-arginyl-L-glutamyl) + tRNA(Glu) + tRNA(Arg) + 2 H(+). It participates in secondary metabolite biosynthesis. Functionally, arginine-containing cyclodipeptide synthase; part of the cluster that mediates the biosynthesis of a highly modified cyclo-arginine-glutamate dipeptide (cRE). Within the pathway, ateA acts as the scaffold-generating enzyme and is responsible for formation of the cyclo-Arg-Glu diketopiperazine (cRW) from L-arginyl-tRNA(Arg) + L-glutamyl-tRNA(Glu). Additional enzymes from the cluster then further modify the cyclo-Arg-Glu diketopiperazine (cRW) scaffold. This chain is Arginine-containing cyclodipeptide synthase ateA, found in Aspergillus terreus.